A 342-amino-acid polypeptide reads, in one-letter code: Nicotinate-nucleotide--dimethylbenzimidazole phosphoribosyltransferase (342 aa).

The active-site Proton acceptor is Glu311.

It belongs to the CobT family.

The catalysed reaction is 5,6-dimethylbenzimidazole + nicotinate beta-D-ribonucleotide = alpha-ribazole 5'-phosphate + nicotinate + H(+). The protein operates within nucleoside biosynthesis; alpha-ribazole biosynthesis; alpha-ribazole from 5,6-dimethylbenzimidazole: step 1/2. Functionally, catalyzes the synthesis of alpha-ribazole-5'-phosphate from nicotinate mononucleotide (NAMN) and 5,6-dimethylbenzimidazole (DMB). In Vibrio atlanticus (strain LGP32) (Vibrio splendidus (strain Mel32)), this protein is Nicotinate-nucleotide--dimethylbenzimidazole phosphoribosyltransferase.